Consider the following 677-residue polypeptide: Methionine--tRNA ligase (677 aa).

The short motif at proline 15–histidine 25 is the 'HIGH' region element. 4 residues coordinate Zn(2+): cysteine 146, cysteine 149, cysteine 159, and cysteine 162. Positions lysine 333 to serine 337 match the 'KMSKS' region motif. Residue lysine 336 coordinates ATP. The tRNA-binding domain occupies aspartate 575–lysine 677.

Belongs to the class-I aminoacyl-tRNA synthetase family. MetG type 1 subfamily. In terms of assembly, homodimer. Zn(2+) is required as a cofactor.

The protein localises to the cytoplasm. It carries out the reaction tRNA(Met) + L-methionine + ATP = L-methionyl-tRNA(Met) + AMP + diphosphate. Functionally, is required not only for elongation of protein synthesis but also for the initiation of all mRNA translation through initiator tRNA(fMet) aminoacylation. The protein is Methionine--tRNA ligase of Escherichia coli O6:K15:H31 (strain 536 / UPEC).